A 302-amino-acid polypeptide reads, in one-letter code: uncharacterized protein (302 aa).

E48 is a catalytic residue.

The protein belongs to the PhzF family.

This is an uncharacterized protein from Clostridium acetobutylicum (strain ATCC 824 / DSM 792 / JCM 1419 / IAM 19013 / LMG 5710 / NBRC 13948 / NRRL B-527 / VKM B-1787 / 2291 / W).